A 131-amino-acid chain; its full sequence is UPF0102 protein YraN (131 aa).

The segment covering Met1–Thr19 has biased composition (polar residues). A disordered region spans residues Met1–Gly20.

The protein belongs to the UPF0102 family.

This is UPF0102 protein YraN from Escherichia coli (strain 55989 / EAEC).